A 259-amino-acid polypeptide reads, in one-letter code: uncharacterized protein (259 aa).

6 helical membrane passes run I9–L31, L84–F106, F126–G148, S153–V175, H196–A215, and T230–G252.

It localises to the cell membrane. This is an uncharacterized protein from Archaeoglobus fulgidus (strain ATCC 49558 / DSM 4304 / JCM 9628 / NBRC 100126 / VC-16).